The primary structure comprises 103 residues: G0/G1 switch protein 2 (103 aa).

Directly interacts with BCL2; this interaction prevents the formation of the anti-apoptotic BAX-BCL2 complex.

It localises to the mitochondrion. In terms of biological role, promotes apoptosis by binding to BCL2, hence preventing the formation of protective BCL2-BAX heterodimers. This Rattus norvegicus (Rat) protein is G0/G1 switch protein 2 (G0s2).